The following is a 505-amino-acid chain: Beta-glucosidase 18 (505 aa).

The signal sequence occupies residues 1–26 (MAGGSKTRIHASLVSTLLLLLPLASA). Residue glutamine 46 participates in a beta-D-glucoside binding. An N-linked (GlcNAc...) asparagine glycan is attached at asparagine 55. Residues histidine 148 and 193-194 (NE) each bind a beta-D-glucoside. Catalysis depends on glutamate 194, which acts as the Proton donor. Cysteine 213 and cysteine 220 are disulfide-bonded. Residue tyrosine 337 participates in a beta-D-glucoside binding. A disulfide bond links cysteine 345 and cysteine 350. A beta-D-glucoside contacts are provided by residues glutamate 408, tryptophan 457, 464–465 (EW), and phenylalanine 473. The active-site Nucleophile is glutamate 408.

Belongs to the glycosyl hydrolase 1 family. In terms of tissue distribution, expressed in roots, leaves, flowers and pollen.

It catalyses the reaction Hydrolysis of terminal, non-reducing beta-D-glucosyl residues with release of beta-D-glucose.. In terms of biological role, hydrolyzes glycosides and monolignol glucosides. Can hydrolyze para-nitrophenyl beta-D-glucopyranoside (pNPGlc) in vitro. Hydrolyzes para-nitrophenyl beta-D-fucopyranoside, para-nitrophenyl beta-D-galactopyranoside and para-nitrophenyl beta-D-xylopyranoside in vitro. Hydrolyzes the monolignol glucosides coniferin and syringin with high catalytic efficiencies. The chain is Beta-glucosidase 18 from Oryza sativa subsp. japonica (Rice).